The chain runs to 480 residues: MTLSFTARWRDELPATYTALLPTLLKNARLIWYNDKLAQQLAIPASLFDVTNGAGVWGGETLLPGMSPVAQVYSGHQFGVWAGQLGDGRGILLGEQLLADGSTLDWHLKGAGLTPYSRMGDGRAVLRSTIRESLASEAMHYLGIPTTRALSIVASDTPVQRETQETGAMLMRLAQSHMRFGHFEHFYYRREPEKVQQLADFAIRHYWPQWQDVPEKYVLWFEEVAARTGRLIVEWQTVGFSHGVMNTDNMSILGLTIDYGPFGFLDDYDPGFIGNHSDHQGRYRFDNQPSVALWNLQRLAQTLTPFIEIDALNRALDRYQDALLTHYGQRMRQKLGFFTEQKDDNVLLNELFSLMAREGSDYSRTFRMLSHTEQQSASSPLRDTFIDRAAFDAWFDRYRARLRTEAVDDALRQQQMQRVNPAVVLRNWLAQRAIDAAEQGDMAELHWLHEVLRQPFTDRDDDYASRPPEWGKRLEVSCSS.

Positions 86, 88, 89, 109, 121, 122, 172, and 179 each coordinate ATP. Aspartate 248 (proton acceptor) is an active-site residue. Asparagine 249 and aspartate 258 together coordinate Mg(2+). Aspartate 258 is an ATP binding site.

This sequence belongs to the SELO family. Mg(2+) is required as a cofactor. It depends on Mn(2+) as a cofactor.

The catalysed reaction is L-seryl-[protein] + ATP = 3-O-(5'-adenylyl)-L-seryl-[protein] + diphosphate. The enzyme catalyses L-threonyl-[protein] + ATP = 3-O-(5'-adenylyl)-L-threonyl-[protein] + diphosphate. It carries out the reaction L-tyrosyl-[protein] + ATP = O-(5'-adenylyl)-L-tyrosyl-[protein] + diphosphate. It catalyses the reaction L-histidyl-[protein] + UTP = N(tele)-(5'-uridylyl)-L-histidyl-[protein] + diphosphate. The catalysed reaction is L-seryl-[protein] + UTP = O-(5'-uridylyl)-L-seryl-[protein] + diphosphate. The enzyme catalyses L-tyrosyl-[protein] + UTP = O-(5'-uridylyl)-L-tyrosyl-[protein] + diphosphate. Nucleotidyltransferase involved in the post-translational modification of proteins. It can catalyze the addition of adenosine monophosphate (AMP) or uridine monophosphate (UMP) to a protein, resulting in modifications known as AMPylation and UMPylation. This is Protein nucleotidyltransferase YdiU from Salmonella paratyphi C (strain RKS4594).